Consider the following 202-residue polypeptide: Protein DCV1 (202 aa).

Residues 1 to 18 (MLNYKLILLFSSFLQLIS) form the signal peptide. 3 helical membrane-spanning segments follow: residues 91–107 (IGGL…LTFI), 137–155 (ILTL…LLCM), and 168–189 (LVWL…FLSF).

The protein resides in the membrane. This is Protein DCV1 (DCV1) from Saccharomyces cerevisiae (strain ATCC 204508 / S288c) (Baker's yeast).